Consider the following 217-residue polypeptide: NAD(P)H-hydrate epimerase (217 aa).

In terms of domain architecture, YjeF N-terminal spans 1–217 (MRAIENAAMA…VAVADIGLSS (217 aa)). 48–52 (NNGGD) is a binding site for (6S)-NADPHX. Residues Asn49 and Asp127 each contribute to the K(+) site. (6S)-NADPHX-binding positions include 131 to 137 (GIGQTRP) and Asp165. Thr168 serves as a coordination point for K(+).

It belongs to the NnrE/AIBP family. K(+) is required as a cofactor.

It catalyses the reaction (6R)-NADHX = (6S)-NADHX. The catalysed reaction is (6R)-NADPHX = (6S)-NADPHX. Catalyzes the epimerization of the S- and R-forms of NAD(P)HX, a damaged form of NAD(P)H that is a result of enzymatic or heat-dependent hydration. This is a prerequisite for the S-specific NAD(P)H-hydrate dehydratase to allow the repair of both epimers of NAD(P)HX. The polypeptide is NAD(P)H-hydrate epimerase (Cereibacter sphaeroides (strain KD131 / KCTC 12085) (Rhodobacter sphaeroides)).